A 1132-amino-acid chain; its full sequence is DNA-directed RNA polymerase I subunit RPA2 (1132 aa).

The segment at 1067-1098 (CMDCGSLLSPLLEKPPPNWSATRHRKTICLLC) adopts a C4-type zinc-finger fold.

Belongs to the RNA polymerase beta chain family. As to quaternary structure, component of the RNA polymerase I (Pol I) complex consisting of at least 13 subunits.

Its subcellular location is the nucleus. The protein resides in the nucleolus. It is found in the chromosome. The enzyme catalyses RNA(n) + a ribonucleoside 5'-triphosphate = RNA(n+1) + diphosphate. In terms of biological role, DNA-dependent RNA polymerase catalyzes the transcription of DNA into RNA using the four ribonucleoside triphosphates as substrates. Second largest core component of RNA polymerase I which synthesizes ribosomal RNA precursors. Proposed to contribute to the polymerase catalytic activity and forms the polymerase active center together with the largest subunit. Pol I is composed of mobile elements and RPA2 is part of the core element with the central large cleft and probably a clamp element that moves to open and close the cleft. The sequence is that of DNA-directed RNA polymerase I subunit RPA2 (polr1b) from Danio rerio (Zebrafish).